We begin with the raw amino-acid sequence, 441 residues long: tRNA-2-methylthio-N(6)-dimethylallyladenosine synthase (441 aa).

The 116-residue stretch at 5 to 120 (KLLYIETFGC…LPEMVRAAEQ (116 aa)) folds into the MTTase N-terminal domain. 6 residues coordinate [4Fe-4S] cluster: C14, C50, C83, C158, C162, and C165. The Radical SAM core domain maps to 144-374 (EGGGVTRFVT…QGLQRDMTIE (231 aa)). Residues 377 to 439 (AGFVGTCQAV…PNSLLGELAV (63 aa)) form the TRAM domain.

It belongs to the methylthiotransferase family. MiaB subfamily. Monomer. [4Fe-4S] cluster serves as cofactor.

Its subcellular location is the cytoplasm. It carries out the reaction N(6)-dimethylallyladenosine(37) in tRNA + (sulfur carrier)-SH + AH2 + 2 S-adenosyl-L-methionine = 2-methylsulfanyl-N(6)-dimethylallyladenosine(37) in tRNA + (sulfur carrier)-H + 5'-deoxyadenosine + L-methionine + A + S-adenosyl-L-homocysteine + 2 H(+). In terms of biological role, catalyzes the methylthiolation of N6-(dimethylallyl)adenosine (i(6)A), leading to the formation of 2-methylthio-N6-(dimethylallyl)adenosine (ms(2)i(6)A) at position 37 in tRNAs that read codons beginning with uridine. The chain is tRNA-2-methylthio-N(6)-dimethylallyladenosine synthase from Geobacter metallireducens (strain ATCC 53774 / DSM 7210 / GS-15).